The sequence spans 299 residues: Maintenance of mitochondrial morphology protein 1 (299 aa).

Over 1–15 the chain is Lumenal; it reads MTNIIFSLQPTFTQG. A helical transmembrane segment spans residues 16–36; it reads LILGQLSVLVLLGLILKYLFL. Over 37–299 the chain is Cytoplasmic; it reads DSTKNPFETT…QEESKRQEEA (263 aa). The interval 47–68 is disordered; sequence SYHPQFDRKPARKQQAQDSQSQ. The 209-residue stretch at 73-281 folds into the SMP-LTD domain; the sequence is DVESLDWFNL…LPGLASVAEA (209 aa).

The protein belongs to the MMM1 family. In terms of assembly, homodimer. Component of the ER-mitochondria encounter structure (ERMES) or MDM complex, composed of MMM1, MDM10, MDM12 and MDM34. An MMM1 homodimer associates with one molecule of MDM12 on each side in a pairwise head-to-tail manner, and the SMP-LTD domains of MMM1 and MDM12 generate a continuous hydrophobic tunnel for phospholipid trafficking.

The protein localises to the endoplasmic reticulum membrane. Component of the ERMES/MDM complex, which serves as a molecular tether to connect the endoplasmic reticulum (ER) and mitochondria. Components of this complex are involved in the control of mitochondrial shape and protein biogenesis, and function in nonvesicular lipid trafficking between the ER and mitochondria. The MDM12-MMM1 subcomplex functions in the major beta-barrel assembly pathway that is responsible for biogenesis of all outer membrane beta-barrel proteins, and acts in a late step after the SAM complex. The MDM10-MDM12-MMM1 subcomplex further acts in the TOM40-specific pathway after the action of the MDM12-MMM1 complex. Essential for establishing and maintaining the structure of mitochondria and maintenance of mtDNA nucleoids. This Coprinopsis cinerea (strain Okayama-7 / 130 / ATCC MYA-4618 / FGSC 9003) (Inky cap fungus) protein is Maintenance of mitochondrial morphology protein 1.